The following is a 253-amino-acid chain: Ditrans,polycis-undecaprenyl-diphosphate synthase ((2E,6E)-farnesyl-diphosphate specific) (253 aa).

The active site involves D25. D25 is a binding site for Mg(2+). Substrate-binding positions include 26–29 (GNGR), W30, R38, H42, and 70–72 (SSE). N73 (proton acceptor) is an active-site residue. Substrate is bound by residues W74, R76, and R193. Mg(2+) is bound at residue H198. Substrate is bound at residue 199 to 201 (RIS). E212 serves as a coordination point for Mg(2+).

Belongs to the UPP synthase family. As to quaternary structure, homodimer. Mg(2+) is required as a cofactor.

The catalysed reaction is 8 isopentenyl diphosphate + (2E,6E)-farnesyl diphosphate = di-trans,octa-cis-undecaprenyl diphosphate + 8 diphosphate. Catalyzes the sequential condensation of isopentenyl diphosphate (IPP) with (2E,6E)-farnesyl diphosphate (E,E-FPP) to yield (2Z,6Z,10Z,14Z,18Z,22Z,26Z,30Z,34E,38E)-undecaprenyl diphosphate (di-trans,octa-cis-UPP). UPP is the precursor of glycosyl carrier lipid in the biosynthesis of bacterial cell wall polysaccharide components such as peptidoglycan and lipopolysaccharide. This chain is Ditrans,polycis-undecaprenyl-diphosphate synthase ((2E,6E)-farnesyl-diphosphate specific), found in Pectobacterium atrosepticum (strain SCRI 1043 / ATCC BAA-672) (Erwinia carotovora subsp. atroseptica).